We begin with the raw amino-acid sequence, 743 residues long: Inhibitor of nuclear factor kappa-B kinase subunit alpha (743 aa).

A Protein kinase domain is found at 15–300 (WDMKDRLGTG…IDCGRPRCFM (286 aa)). Residues 21–29 (LGTGGFGNV) and K44 contribute to the ATP site. D144 acts as the Proton acceptor in catalysis. The interval 453–474 (LLRFNTNLTKMKNTMVSASQQL) is leucine-zipper. Residues 736–741 (MDFSWL) are NEMO-binding.

Belongs to the protein kinase superfamily. Ser/Thr protein kinase family. I-kappa-B kinase subfamily.

It is found in the cytoplasm. The protein resides in the nucleus. It catalyses the reaction L-seryl-[I-kappa-B protein] + ATP = O-phospho-L-seryl-[I-kappa-B protein] + ADP + H(+). Its activity is regulated as follows. Activated when phosphorylated and inactivated when dephosphorylated. Functionally, phosphorylates inhibitors of NF-kappa-B thus leading to the dissociation of the inhibitor/NF-kappa-B complex and ultimately the degradation of the inhibitor. Phosphorylates 'Ser-10' of histone H3 at NF-kappa-B-regulated promoters during inflammatory responses triggered by cytokines. The sequence is that of Inhibitor of nuclear factor kappa-B kinase subunit alpha (chuk) from Xenopus laevis (African clawed frog).